A 329-amino-acid polypeptide reads, in one-letter code: Cytosolic Fe-S cluster assembly factor NBP35 (329 aa).

The segment at 1–33 (MAPSQVEDISKTELETPEHCPGPESEQAGKEDA) is disordered. Residues 8–18 (DISKTELETPE) are compositionally biased toward basic and acidic residues. [4Fe-4S] cluster-binding residues include Cys20, Cys34, Cys37, and Cys43. An ATP-binding site is contributed by 74 to 81 (GKGGVGKS). [4Fe-4S] cluster contacts are provided by Cys248 and Cys251.

It belongs to the Mrp/NBP35 ATP-binding proteins family. NUBP1/NBP35 subfamily. In terms of assembly, heterotetramer of 2 NBP35 and 2 CFD1 chains. [4Fe-4S] cluster serves as cofactor.

It is found in the cytoplasm. The protein resides in the nucleus. In terms of biological role, component of the cytosolic iron-sulfur (Fe/S) protein assembly (CIA) machinery. Required for maturation of extramitochondrial Fe-S proteins. The NBP35-CFD1 heterotetramer forms a Fe-S scaffold complex, mediating the de novo assembly of an Fe-S cluster and its transfer to target apoproteins. Required for biogenesis and export of both ribosomal subunits, which may reflect a role in assembly of the Fe/S clusters in RLI1, a protein which performs rRNA processing and ribosome export. The protein is Cytosolic Fe-S cluster assembly factor NBP35 of Debaryomyces hansenii (strain ATCC 36239 / CBS 767 / BCRC 21394 / JCM 1990 / NBRC 0083 / IGC 2968) (Yeast).